We begin with the raw amino-acid sequence, 1330 residues long: MLFYNKVMDRTAIKQLISRLITHFGITYTTYILDQLKTVGFKQATQAAISLGIDDLLTAPSKSWLIQDAEQQGYISEKHYRYGNVHAVEKLRQLIETWYATSEYLKQEMNPNFRMTDPLNPVHMMSFSGARGSTSQVHQLVGMRGLMSDPQGQIIDLPIQSNFREGLSLTEYIISCYGARKGVVDTAVRTSDAGYLTRRLVEVVQHIVVRKVDCGTSENIFVTPLQNNYKKNNKLIGRILADNIYINGRCIAIRNQDITTNLVISLINFQRKGIFIRSPLICKSMLWICQLCYGWSLTHGNLIELGEAVGIIAGQSIGEPGTQLTLRTFHTGGVFTGDIAEHIRTPFNGIIQFDTNSVYPTRTRHGHPAWICNNNLSVVIKSKKKLHNLVIPTQSLLLVQSNQYVESKQVIAEVRAKTSPFKEKVQKYIYSNLSGEMHWSSKVQHSSEYIHSNVHLLRKTGHIWILAGNFDKDNKFSFIFYQNQDKLDNKLPIAKQTLNYFQLKEHFLNNFWNSIYSSIILYNYRFLEKKNNKYEKKLLFQFMLKLPKNGILKQNDIFAIFNDPKYRIKNSGIIKYGNIKVDLINKKNDIFEDQKTKTVRPRYKILKEGNFFLLPEEVYILDQSSFSSILVKNNSFIKAGTKITFNISSKITGFVKIKKKFNNFKIKILPGSIYYPKEKQKNFKQNGILIPPGEKIFEQFRAKNWIYLEWIVLSKDNSFFLIRPAIEYKIIFNDNPLTLPIPFYLDLLKEQKKIKIQTVKYILYEDSEEVEINPDTDIQLIQTCLILNWETKVFIKEAHISFIKIRINKIIKNFFQINLIENINLMNKKKNNNIILNYLFKKKRYIINQKDCEKILLLSKTWGIIRTPSNKNQEKSFFLILSPFNLFQTILFDKTKQNLKIENNVEKLFTYEPKKIIKTFNIEKRKNFVEFLGLLGYLQNITKSFQLFSCKKFSDKSIPINFSIIDNLKKKIKISKWFFLNENKKVQKFFLTQNTILSLLNWSFPIFDLAKKKTQLFNLGHFFCDGLSIAEYPTFSESGQIIAIYDDLSLVIRLAKPYLATGGAIIHNNYGEIVKEGDILITLIYERLKSGDIIQGLPKVEQLLEARLTNPVSINLEKGFGEWNKDMTNFFGSLWGYFLSAQISMEQSQVNLVNQIQKVYRSQGVNISDKHIEIIVRQMTSKVFTLEDGMTNGFLPGELIEFARAKRMNRALEEVIPYKPVLLGITKASLNTQSFISEASFQETTRVLAKAALRGRIDWLKGLKENVILGGIIPTGTGCEEVLWQITLEKQKNILLKKNKSKLFHNKVKDIFLYKKLSISFTSEKIHKNY.

4 residues coordinate Zn(2+): cysteine 214, cysteine 282, cysteine 289, and cysteine 292.

Belongs to the RNA polymerase beta' chain family. RpoC2 subfamily. In terms of assembly, in plastids the minimal PEP RNA polymerase catalytic core is composed of four subunits: alpha, beta, beta', and beta''. When a (nuclear-encoded) sigma factor is associated with the core the holoenzyme is formed, which can initiate transcription. It depends on Zn(2+) as a cofactor.

It localises to the plastid. It is found in the chloroplast. The enzyme catalyses RNA(n) + a ribonucleoside 5'-triphosphate = RNA(n+1) + diphosphate. Its function is as follows. DNA-dependent RNA polymerase catalyzes the transcription of DNA into RNA using the four ribonucleoside triphosphates as substrates. This chain is DNA-directed RNA polymerase subunit beta'', found in Physcomitrium patens (Spreading-leaved earth moss).